We begin with the raw amino-acid sequence, 206 residues long: Large ribosomal subunit protein uL4 (206 aa).

A disordered region spans residues 44–87 (KRQGTHATKTRGMKRGGGAKPWRQKGTGRARAGSTRSPLWRGGG).

It belongs to the universal ribosomal protein uL4 family. As to quaternary structure, part of the 50S ribosomal subunit.

In terms of biological role, one of the primary rRNA binding proteins, this protein initially binds near the 5'-end of the 23S rRNA. It is important during the early stages of 50S assembly. It makes multiple contacts with different domains of the 23S rRNA in the assembled 50S subunit and ribosome. Functionally, forms part of the polypeptide exit tunnel. The polypeptide is Large ribosomal subunit protein uL4 (Maridesulfovibrio salexigens (strain ATCC 14822 / DSM 2638 / NCIMB 8403 / VKM B-1763) (Desulfovibrio salexigens)).